An 84-amino-acid chain; its full sequence is RNA-binding protein Hfq (84 aa).

A Sm domain is found at 11-71 (DTFLNHVRKN…ISTIMPGHPV (61 aa)).

Belongs to the Hfq family. In terms of assembly, homohexamer.

Its function is as follows. RNA chaperone that binds small regulatory RNA (sRNAs) and mRNAs to facilitate mRNA translational regulation in response to envelope stress, environmental stress and changes in metabolite concentrations. Also binds with high specificity to tRNAs. The chain is RNA-binding protein Hfq from Methylorubrum populi (strain ATCC BAA-705 / NCIMB 13946 / BJ001) (Methylobacterium populi).